The chain runs to 123 residues: uncharacterized protein (123 aa).

Residues 1–24 (MGGGGPPARVQGTEGSQTGGGAVA) form a disordered region.

This is an uncharacterized protein from Halorubrum pleomorphic virus 1 (HRPV-1).